The primary structure comprises 294 residues: 4-hydroxy-tetrahydrodipicolinate synthase (294 aa).

A pyruvate-binding site is contributed by Thr-45. Tyr-133 (proton donor/acceptor) is an active-site residue. Lys-161 serves as the catalytic Schiff-base intermediate with substrate. Ile-203 is a binding site for pyruvate.

This sequence belongs to the DapA family. In terms of assembly, homotetramer; dimer of dimers.

The protein resides in the cytoplasm. It carries out the reaction L-aspartate 4-semialdehyde + pyruvate = (2S,4S)-4-hydroxy-2,3,4,5-tetrahydrodipicolinate + H2O + H(+). The protein operates within amino-acid biosynthesis; L-lysine biosynthesis via DAP pathway; (S)-tetrahydrodipicolinate from L-aspartate: step 3/4. In terms of biological role, catalyzes the condensation of (S)-aspartate-beta-semialdehyde [(S)-ASA] and pyruvate to 4-hydroxy-tetrahydrodipicolinate (HTPA). In Shewanella pealeana (strain ATCC 700345 / ANG-SQ1), this protein is 4-hydroxy-tetrahydrodipicolinate synthase.